The primary structure comprises 765 residues: SNF-related serine/threonine-protein kinase (765 aa).

One can recognise a Protein kinase domain in the interval 16 to 269; sequence YDLDKTLGRG…LEEIENHPWL (254 aa). ATP is bound by residues 22-30 and K45; that span reads LGRGHFAVV. The Proton acceptor role is filled by D139. S162 carries the post-translational modification Phosphoserine. Phosphothreonine; by LKB1 is present on T173. The 44-residue stretch at 291-334 folds into the UBA domain; it reads SEEEHNSIIQRMVLGDIADRDAIVEALETNRYNHITATYFLLAE. Phosphoserine occurs at positions 362, 390, 482, 495, and 518. A disordered region spans residues 512–634; the sequence is LKMNIASPGT…RCAGPSNSMQ (123 aa). Positions 522–532 are enriched in basic residues; that stretch reads VHKRYHRRKSQ. The span at 533 to 542 shows a compositional bias: low complexity; sequence GRGSSCSSSE. R534 carries the omega-N-methylarginine modification. Basic and acidic residues predominate over residues 549–558; the sequence is ESRRRLDKDS. Gly residues predominate over residues 603–614; the sequence is AGGGSPSSGSGG. S607 bears the Phosphoserine mark.

Belongs to the protein kinase superfamily. CAMK Ser/Thr protein kinase family. Requires Mg(2+) as cofactor. Autophosphorylated. Phosphorylation on Thr-173 by STK11/LKB1 in complex with STE20-related adapter-alpha (STRADA) pseudo kinase and CAB39. Expressed in hematopoietic progenitor cells and leukemic cell lines. Weakly expressed in the testis.

The protein localises to the nucleus. It catalyses the reaction L-seryl-[protein] + ATP = O-phospho-L-seryl-[protein] + ADP + H(+). The enzyme catalyses L-threonyl-[protein] + ATP = O-phospho-L-threonyl-[protein] + ADP + H(+). With respect to regulation, activated by phosphorylation on Thr-173. Its function is as follows. May play a role in hematopoietic cell proliferation or differentiation. Potential mediator of neuronal apoptosis. The polypeptide is SNF-related serine/threonine-protein kinase (Homo sapiens (Human)).